Reading from the N-terminus, the 121-residue chain is Small ribosomal subunit protein bS6 (121 aa).

The protein belongs to the bacterial ribosomal protein bS6 family.

In terms of biological role, binds together with bS18 to 16S ribosomal RNA. The polypeptide is Small ribosomal subunit protein bS6 (Rickettsia canadensis (strain McKiel)).